Reading from the N-terminus, the 196-residue chain is Pyridoxine/pyridoxamine 5'-phosphate oxidase (196 aa).

Residues 44–49 (RTVLLK), 59–60 (YT), R65, K66, and Q88 contribute to the FMN site. K49 contributes to the substrate binding site. Substrate is bound by residues Y106, R110, and S114. FMN-binding positions include 123–124 (QS) and W169. 175 to 177 (RLH) contacts substrate. R179 provides a ligand contact to FMN.

Belongs to the pyridoxamine 5'-phosphate oxidase family. As to quaternary structure, homodimer. FMN serves as cofactor.

It catalyses the reaction pyridoxamine 5'-phosphate + O2 + H2O = pyridoxal 5'-phosphate + H2O2 + NH4(+). The catalysed reaction is pyridoxine 5'-phosphate + O2 = pyridoxal 5'-phosphate + H2O2. The protein operates within cofactor metabolism; pyridoxal 5'-phosphate salvage; pyridoxal 5'-phosphate from pyridoxamine 5'-phosphate: step 1/1. Its pathway is cofactor metabolism; pyridoxal 5'-phosphate salvage; pyridoxal 5'-phosphate from pyridoxine 5'-phosphate: step 1/1. Catalyzes the oxidation of either pyridoxine 5'-phosphate (PNP) or pyridoxamine 5'-phosphate (PMP) into pyridoxal 5'-phosphate (PLP). This is Pyridoxine/pyridoxamine 5'-phosphate oxidase from Alkalilimnicola ehrlichii (strain ATCC BAA-1101 / DSM 17681 / MLHE-1).